The sequence spans 38 residues: Photosystem II reaction center protein Y (38 aa).

A helical transmembrane segment spans residues 4 to 22 (TIVVFAPIIAALAWVVFNI).

Belongs to the PsbY family. In terms of assembly, PSII is composed of 1 copy each of membrane proteins PsbA, PsbB, PsbC, PsbD, PsbE, PsbF, PsbH, PsbI, PsbJ, PsbK, PsbL, PsbM, PsbT, PsbX, PsbY, Psb30/Ycf12, peripheral proteins PsbO, CyanoQ (PsbQ), PsbU, PsbV and a large number of cofactors. It forms dimeric complexes.

It is found in the cellular thylakoid membrane. Functionally, loosely associated component of the core of photosystem II (PSII), it is not always seen in crystals. PSII is a light-driven water plastoquinone oxidoreductase, using light energy to abstract electrons from H(2)O, generating a proton gradient subsequently used for ATP formation. In Prochlorococcus marinus (strain MIT 9215), this protein is Photosystem II reaction center protein Y.